The primary structure comprises 250 residues: tRNA (guanine-N(1)-)-methyltransferase (250 aa).

S-adenosyl-L-methionine is bound by residues Gly113 and 133–138 (VGDYVL).

This sequence belongs to the RNA methyltransferase TrmD family. As to quaternary structure, homodimer.

It localises to the cytoplasm. The enzyme catalyses guanosine(37) in tRNA + S-adenosyl-L-methionine = N(1)-methylguanosine(37) in tRNA + S-adenosyl-L-homocysteine + H(+). Its function is as follows. Specifically methylates guanosine-37 in various tRNAs. The sequence is that of tRNA (guanine-N(1)-)-methyltransferase from Proteus mirabilis (strain HI4320).